The chain runs to 261 residues: Prostate-specific antigen (261 aa).

A signal peptide spans 1 to 17 (MWVPVVFLTLSVTWIGA). A propeptide spans 18 to 24 (APLILSR) (activation peptide). A Peptidase S1 domain is found at 25 to 258 (IVGGWECEKH…YRKWIKDTIV (234 aa)). Cystine bridges form between cysteine 31–cysteine 173, cysteine 50–cysteine 66, cysteine 152–cysteine 219, cysteine 184–cysteine 198, and cysteine 209–cysteine 234. Histidine 65 serves as the catalytic Charge relay system. The N-linked (GlcNAc...) asparagine glycan is linked to asparagine 69. The active-site Charge relay system is the aspartate 120. The active-site Charge relay system is the serine 213.

It belongs to the peptidase S1 family. Kallikrein subfamily. Forms a heterodimer with SERPINA5.

It localises to the secreted. The enzyme catalyses Preferential cleavage: -Tyr-|-Xaa-.. With respect to regulation, inhibited by SERPINA5. Activity is strongly inhibited by Zn2+, 100 times more abundant in semen than in serum. This inhibition is relieved by exposure to semenogelins, which are avid zinc binders. Its function is as follows. Hydrolyzes semenogelin-1 thus leading to the liquefaction of the seminal coagulum. This chain is Prostate-specific antigen (KLK3), found in Homo sapiens (Human).